Here is a 156-residue protein sequence, read N- to C-terminus: Ribosomal RNA large subunit methyltransferase H (156 aa).

Residues leucine 73, glycine 104, and 123 to 128 (LSPLTL) each bind S-adenosyl-L-methionine.

Belongs to the RNA methyltransferase RlmH family. In terms of assembly, homodimer.

The protein resides in the cytoplasm. It catalyses the reaction pseudouridine(1915) in 23S rRNA + S-adenosyl-L-methionine = N(3)-methylpseudouridine(1915) in 23S rRNA + S-adenosyl-L-homocysteine + H(+). Its function is as follows. Specifically methylates the pseudouridine at position 1915 (m3Psi1915) in 23S rRNA. This is Ribosomal RNA large subunit methyltransferase H from Marinobacter nauticus (strain ATCC 700491 / DSM 11845 / VT8) (Marinobacter aquaeolei).